A 215-amino-acid polypeptide reads, in one-letter code: Pyridoxine/pyridoxamine 5'-phosphate oxidase (215 aa).

Substrate contacts are provided by residues 9 to 12 (RRDY) and Lys69. FMN-binding positions include 64-69 (RILLLK), 79-80 (FT), Lys86, and Gln108. Residues Tyr126, Arg130, and Ser134 each contribute to the substrate site. FMN-binding positions include 143–144 (QS) and Trp188. Residue 194–196 (RLH) participates in substrate binding. Arg198 lines the FMN pocket.

The protein belongs to the pyridoxamine 5'-phosphate oxidase family. As to quaternary structure, homodimer. FMN serves as cofactor.

It catalyses the reaction pyridoxamine 5'-phosphate + O2 + H2O = pyridoxal 5'-phosphate + H2O2 + NH4(+). It carries out the reaction pyridoxine 5'-phosphate + O2 = pyridoxal 5'-phosphate + H2O2. It participates in cofactor metabolism; pyridoxal 5'-phosphate salvage; pyridoxal 5'-phosphate from pyridoxamine 5'-phosphate: step 1/1. The protein operates within cofactor metabolism; pyridoxal 5'-phosphate salvage; pyridoxal 5'-phosphate from pyridoxine 5'-phosphate: step 1/1. Its function is as follows. Catalyzes the oxidation of either pyridoxine 5'-phosphate (PNP) or pyridoxamine 5'-phosphate (PMP) into pyridoxal 5'-phosphate (PLP). This Pseudomonas fluorescens (strain Pf0-1) protein is Pyridoxine/pyridoxamine 5'-phosphate oxidase.